The primary structure comprises 609 residues: mRNA cap guanine-N(7) methyltransferase (609 aa).

A compositionally biased stretch (basic and acidic residues) spans 1–10 (MASKEEERTG). The segment at 1-252 (MASKEEERTG…EEDAMRNSQS (252 aa)) is disordered. 2 stretches are compositionally biased toward low complexity: residues 28-47 (QPVVPAEPASASASIEATPT) and 70-87 (PQTTTIEPSQQPEQQQKQ). A compositionally biased stretch (basic and acidic residues) spans 148–163 (ANDRPISKRKRLEERH). A compositionally biased stretch (pro residues) spans 193–205 (PRSPSPPLPPRSP). The span at 233–247 (RRQEERERALEEDAM) shows a compositional bias: basic and acidic residues. The mRNA cap 0 methyltransferase domain maps to 278 to 590 (SKIKGLRSFN…KYTPLGFTSA (313 aa)). 287–288 (NN) lines the mRNA pocket. S-adenosyl-L-methionine-binding positions include lysine 291, glycine 314, aspartate 338, aspartate 379, 422–424 (MFA), and tyrosine 427.

Belongs to the class I-like SAM-binding methyltransferase superfamily. mRNA cap 0 methyltransferase family.

Its subcellular location is the nucleus. The catalysed reaction is a 5'-end (5'-triphosphoguanosine)-ribonucleoside in mRNA + S-adenosyl-L-methionine = a 5'-end (N(7)-methyl 5'-triphosphoguanosine)-ribonucleoside in mRNA + S-adenosyl-L-homocysteine. In terms of biological role, responsible for methylating the 5'-cap structure of mRNAs. The polypeptide is mRNA cap guanine-N(7) methyltransferase (abd1) (Aspergillus niger (strain ATCC MYA-4892 / CBS 513.88 / FGSC A1513)).